A 395-amino-acid polypeptide reads, in one-letter code: Phosphoglycerate kinase (395 aa).

Substrate-binding positions include 20–22 (DFN), Arg36, 59–62 (HLGR), Arg120, and Arg157. Residues Lys208, Gly296, Glu327, and 353 to 356 (GGDT) contribute to the ATP site.

This sequence belongs to the phosphoglycerate kinase family. Monomer.

Its subcellular location is the cytoplasm. The catalysed reaction is (2R)-3-phosphoglycerate + ATP = (2R)-3-phospho-glyceroyl phosphate + ADP. The protein operates within carbohydrate degradation; glycolysis; pyruvate from D-glyceraldehyde 3-phosphate: step 2/5. This Tropheryma whipplei (strain TW08/27) (Whipple's bacillus) protein is Phosphoglycerate kinase.